Here is a 461-residue protein sequence, read N- to C-terminus: Propionyl-CoA carboxylase regulator (461 aa).

The region spanning 11–65 (LRELRVKLGLTQKVFAERLGASLPYLNQMENNHRPVSATVVLALAQEFGVDVTKL) is the HTH cro/C1-type domain. The segment at residues 22–41 (QKVFAERLGASLPYLNQMEN) is a DNA-binding region (H-T-H motif).

The protein belongs to the short-chain fatty acyl-CoA assimilation regulator (ScfR) family.

Its function is as follows. Transcriptional regulator that controls propionyl-CoA assimilation through the methylmalonyl-CoA pathway via regulation of pccB expression. The chain is Propionyl-CoA carboxylase regulator from Cereibacter sphaeroides (strain ATCC 17023 / DSM 158 / JCM 6121 / CCUG 31486 / LMG 2827 / NBRC 12203 / NCIMB 8253 / ATH 2.4.1.) (Rhodobacter sphaeroides).